The primary structure comprises 98 residues: uncharacterized protein (98 aa).

The protein belongs to the HesB/IscA family.

This is an uncharacterized protein from Staphylococcus saprophyticus subsp. saprophyticus (strain ATCC 15305 / DSM 20229 / NCIMB 8711 / NCTC 7292 / S-41).